Consider the following 118-residue polypeptide: Large ribosomal subunit protein bL19 (118 aa).

It belongs to the bacterial ribosomal protein bL19 family.

In terms of biological role, this protein is located at the 30S-50S ribosomal subunit interface and may play a role in the structure and function of the aminoacyl-tRNA binding site. The sequence is that of Large ribosomal subunit protein bL19 from Campylobacter hominis (strain ATCC BAA-381 / DSM 21671 / CCUG 45161 / LMG 19568 / NCTC 13146 / CH001A).